A 339-amino-acid polypeptide reads, in one-letter code: Ketol-acid reductoisomerase (NADP(+)) (339 aa).

The 182-residue stretch at 1–182 (MKVYYDSDAD…GGGRSGVIET (182 aa)) folds into the KARI N-terminal Rossmann domain. Residues 24 to 27 (YGSQ), arginine 48, serine 51, serine 53, and 83 to 86 (DEHQ) contribute to the NADP(+) site. Histidine 108 is an active-site residue. Glycine 134 contacts NADP(+). The 146-residue stretch at 183-328 (TFREEVETDL…ARLRKMMPWI (146 aa)) folds into the KARI C-terminal knotted domain. Aspartate 191, glutamate 195, glutamate 227, and glutamate 231 together coordinate Mg(2+). Serine 252 is a binding site for substrate.

It belongs to the ketol-acid reductoisomerase family. Mg(2+) is required as a cofactor.

The enzyme catalyses (2R)-2,3-dihydroxy-3-methylbutanoate + NADP(+) = (2S)-2-acetolactate + NADPH + H(+). It carries out the reaction (2R,3R)-2,3-dihydroxy-3-methylpentanoate + NADP(+) = (S)-2-ethyl-2-hydroxy-3-oxobutanoate + NADPH + H(+). The protein operates within amino-acid biosynthesis; L-isoleucine biosynthesis; L-isoleucine from 2-oxobutanoate: step 2/4. It functions in the pathway amino-acid biosynthesis; L-valine biosynthesis; L-valine from pyruvate: step 2/4. In terms of biological role, involved in the biosynthesis of branched-chain amino acids (BCAA). Catalyzes an alkyl-migration followed by a ketol-acid reduction of (S)-2-acetolactate (S2AL) to yield (R)-2,3-dihydroxy-isovalerate. In the isomerase reaction, S2AL is rearranged via a Mg-dependent methyl migration to produce 3-hydroxy-3-methyl-2-ketobutyrate (HMKB). In the reductase reaction, this 2-ketoacid undergoes a metal-dependent reduction by NADPH to yield (R)-2,3-dihydroxy-isovalerate. This Zymomonas mobilis subsp. mobilis (strain ATCC 31821 / ZM4 / CP4) protein is Ketol-acid reductoisomerase (NADP(+)).